The primary structure comprises 70 residues: Large ribosomal subunit protein uL29 (70 aa).

It belongs to the universal ribosomal protein uL29 family.

This is Large ribosomal subunit protein uL29 from Rickettsia bellii (strain OSU 85-389).